The following is a 416-amino-acid chain: Multifunctional CCA protein (416 aa).

ATP is bound by residues Gly-8 and Arg-11. Positions 8 and 11 each coordinate CTP. Positions 21 and 23 each coordinate Mg(2+). Arg-91, Arg-138, and Arg-141 together coordinate ATP. Arg-91, Arg-138, and Arg-141 together coordinate CTP. One can recognise an HD domain in the interval 229 to 331 (TGLHQELVSD…YELLQRCDAF (103 aa)).

It belongs to the tRNA nucleotidyltransferase/poly(A) polymerase family. Bacterial CCA-adding enzyme type 1 subfamily. As to quaternary structure, monomer. Can also form homodimers and oligomers. Mg(2+) serves as cofactor. Requires Ni(2+) as cofactor.

The enzyme catalyses a tRNA precursor + 2 CTP + ATP = a tRNA with a 3' CCA end + 3 diphosphate. It carries out the reaction a tRNA with a 3' CCA end + 2 CTP + ATP = a tRNA with a 3' CCACCA end + 3 diphosphate. Its function is as follows. Catalyzes the addition and repair of the essential 3'-terminal CCA sequence in tRNAs without using a nucleic acid template. Adds these three nucleotides in the order of C, C, and A to the tRNA nucleotide-73, using CTP and ATP as substrates and producing inorganic pyrophosphate. tRNA 3'-terminal CCA addition is required both for tRNA processing and repair. Also involved in tRNA surveillance by mediating tandem CCA addition to generate a CCACCA at the 3' terminus of unstable tRNAs. While stable tRNAs receive only 3'-terminal CCA, unstable tRNAs are marked with CCACCA and rapidly degraded. This chain is Multifunctional CCA protein, found in Xylella fastidiosa (strain 9a5c).